We begin with the raw amino-acid sequence, 365 residues long: Cobalt-precorrin-5B C(1)-methyltransferase (365 aa).

Belongs to the CbiD family.

The enzyme catalyses Co-precorrin-5B + S-adenosyl-L-methionine = Co-precorrin-6A + S-adenosyl-L-homocysteine. Its pathway is cofactor biosynthesis; adenosylcobalamin biosynthesis; cob(II)yrinate a,c-diamide from sirohydrochlorin (anaerobic route): step 6/10. Catalyzes the methylation of C-1 in cobalt-precorrin-5B to form cobalt-precorrin-6A. The protein is Cobalt-precorrin-5B C(1)-methyltransferase of Moorella thermoacetica (strain ATCC 39073 / JCM 9320).